Consider the following 460-residue polypeptide: Zinc transporter 6 (460 aa).

The Cytoplasmic portion of the chain corresponds to 1-33 (MGTIHLFRKPQRSFFGKLLQEFRLVAADRRSWK). The helical transmembrane segment at 34 to 54 (ILLFGAINVLCTGFLLMWCSS) threads the bilayer. Residues 55–64 (TNSIALTAYT) are Extracellular-facing. A helical transmembrane segment spans residues 65 to 85 (YLTIFDLFSLITCLISYWVMM). Residues 86–98 (RKPSPVYSFGFER) lie on the Cytoplasmic side of the membrane. Residues 99–119 (LEVLAVFASTVLAQLGALFIL) form a helical membrane-spanning segment. Over 120–134 (KESAERFLEQPEIHT) the chain is Extracellular. Residues 135-155 (GRLLVGTFVALSFNLFTMLSI) form a helical membrane-spanning segment. Topologically, residues 156–200 (RNKPFAYVSEAASTSWLQEHVADLSRSLCGLIPGLSSIFLPRMNP) are cytoplasmic. Residues 201-221 (FVLIDLAGAFALCITYMLIEI) form a helical membrane-spanning segment. Residues 222-223 (NN) lie on the Extracellular side of the membrane. Residues 224–244 (YFAVDTASAIAIALMTFGTMY) traverse the membrane as a helical segment. Residues 245-460 (PMSVYSGKVL…GINRMGQPRP (216 aa)) are Cytoplasmic-facing. A disordered region spans residues 371-390 (TPVTSTPAKPSSPPPEFSFN).

This sequence belongs to the cation diffusion facilitator (CDF) transporter (TC 2.A.4) family. SLC30A subfamily. Heterodimer with SLC30A5; form a functional zinc ion transmembrane transporter. In terms of tissue distribution, expressed in brain and liver, and to a lower extent also in lung. Highly expressed in brain (at protein level).

The protein localises to the golgi apparatus. The protein resides in the trans-Golgi network membrane. In terms of biological role, has probably no intrinsic transporter activity but together with SLC30A5 forms a functional zinc ion:proton antiporter heterodimer, mediating zinc entry into the lumen of organelles along the secretory pathway. As part of that zinc ion:proton antiporter, contributes to zinc ion homeostasis within the early secretory pathway and regulates the activation and folding of enzymes like alkaline phosphatases and enzymes involved in phosphatidylinositol glycan anchor biosynthesis. In Mus musculus (Mouse), this protein is Zinc transporter 6 (Slc30a6).